The following is a 146-amino-acid chain: ATP synthase epsilon chain 2 (146 aa).

This sequence belongs to the ATPase epsilon chain family. In terms of assembly, F-type ATPases have 2 components, CF(1) - the catalytic core - and CF(0) - the membrane proton channel. CF(1) has five subunits: alpha(3), beta(3), gamma(1), delta(1), epsilon(1). CF(0) has three main subunits: a, b and c.

The protein localises to the cell inner membrane. Produces ATP from ADP in the presence of a proton gradient across the membrane. The protein is ATP synthase epsilon chain 2 of Cereibacter sphaeroides (strain ATCC 17023 / DSM 158 / JCM 6121 / CCUG 31486 / LMG 2827 / NBRC 12203 / NCIMB 8253 / ATH 2.4.1.) (Rhodobacter sphaeroides).